We begin with the raw amino-acid sequence, 330 residues long: Tetraacyldisaccharide 4'-kinase (330 aa).

ATP is bound at residue 58–65; that stretch reads TVGGSGKT.

Belongs to the LpxK family.

The catalysed reaction is a lipid A disaccharide + ATP = a lipid IVA + ADP + H(+). Its pathway is glycolipid biosynthesis; lipid IV(A) biosynthesis; lipid IV(A) from (3R)-3-hydroxytetradecanoyl-[acyl-carrier-protein] and UDP-N-acetyl-alpha-D-glucosamine: step 6/6. Functionally, transfers the gamma-phosphate of ATP to the 4'-position of a tetraacyldisaccharide 1-phosphate intermediate (termed DS-1-P) to form tetraacyldisaccharide 1,4'-bis-phosphate (lipid IVA). The protein is Tetraacyldisaccharide 4'-kinase of Shewanella halifaxensis (strain HAW-EB4).